A 649-amino-acid polypeptide reads, in one-letter code: Protein arginine N-methyltransferase 5 (649 aa).

The tract at residues 10–300 is TIM barrel; the sequence is KSESRYCGVE…SPYLDYIAYI (291 aa). Residues 321–627 enclose the SAM-dependent MTase PRMT-type domain; it reads LQSPLQPLMD…CGATKVWYEW (307 aa). Tyr337 lines the S-adenosyl-L-methionine pocket. Phe340 contacts a protein. S-adenosyl-L-methionine is bound by residues 346 to 347, Glu405, and 433 to 434; these read KY and DM. A protein is bound by residues Glu449 and Glu458. Catalysis depends on proton donor/acceptor residues Glu449 and Glu458. The segment at 479 to 649 is beta barrel; the sequence is PSSYTSFIEP…SNGRSYWVGL (171 aa). The segment at 491 to 507 is dimerization; sequence ASKLHNDIKAHKDIAHF.

This sequence belongs to the class I-like SAM-binding methyltransferase superfamily. Protein arginine N-methyltransferase family.

The protein resides in the cytoplasm. It carries out the reaction L-arginyl-[protein] + 2 S-adenosyl-L-methionine = N(omega),N(omega)'-dimethyl-L-arginyl-[protein] + 2 S-adenosyl-L-homocysteine + 2 H(+). Functionally, methylates arginine residues in proteins such as histone H4. This chain is Protein arginine N-methyltransferase 5 (PRMT5), found in Oryza sativa subsp. japonica (Rice).